A 124-amino-acid polypeptide reads, in one-letter code: Fluoride-specific ion channel FluC (124 aa).

The next 4 helical transmembrane spans lie at 4-24 (IVAIALFGALGCLARYLLAGW), 32-52 (GFPYGTLTVNVVGAFLIGLIM), 67-87 (IGLTIGFLGGLTTFSTFSYET), and 96-116 (FITAAVNVLASVLVCLACTWL). Na(+)-binding residues include Gly75 and Thr78.

Belongs to the fluoride channel Fluc/FEX (TC 1.A.43) family.

Its subcellular location is the cell inner membrane. The enzyme catalyses fluoride(in) = fluoride(out). Na(+) is not transported, but it plays an essential structural role and its presence is essential for fluoride channel function. Its function is as follows. Fluoride-specific ion channel. Important for reducing fluoride concentration in the cell, thus reducing its toxicity. This Geobacter metallireducens (strain ATCC 53774 / DSM 7210 / GS-15) protein is Fluoride-specific ion channel FluC.